The following is a 160-amino-acid chain: Phosphatidylinositol N-acetylglucosaminyltransferase subunit gpi15 (160 aa).

The next 2 helical transmembrane spans lie at glycine 22 to isoleucine 42 and isoleucine 48 to valine 68.

This sequence belongs to the PIGH family.

Its subcellular location is the endoplasmic reticulum membrane. The enzyme catalyses a 1,2-diacyl-sn-glycero-3-phospho-(1D-myo-inositol) + UDP-N-acetyl-alpha-D-glucosamine = a 6-(N-acetyl-alpha-D-glucosaminyl)-1-(1,2-diacyl-sn-glycero-3-phospho)-1D-myo-inositol + UDP + H(+). Its pathway is glycolipid biosynthesis; glycosylphosphatidylinositol-anchor biosynthesis. In terms of biological role, part of the complex catalyzing the transfer of N-acetylglucosamine from UDP-N-acetylglucosamine to phosphatidylinositol, the first step of GPI biosynthesis. In Schizosaccharomyces pombe (strain 972 / ATCC 24843) (Fission yeast), this protein is Phosphatidylinositol N-acetylglucosaminyltransferase subunit gpi15 (gpi15).